A 240-amino-acid polypeptide reads, in one-letter code: Large ribosomal subunit protein bL25 (240 aa).

Disordered regions lie at residues Met1–Arg20 and Pro220–Lys240. The span at Pro220–Gly229 shows a compositional bias: low complexity. The segment covering Gly230–Lys240 has biased composition (basic and acidic residues).

It belongs to the bacterial ribosomal protein bL25 family. CTC subfamily. In terms of assembly, part of the 50S ribosomal subunit; part of the 5S rRNA/L5/L18/L25 subcomplex. Contacts the 5S rRNA. Binds to the 5S rRNA independently of L5 and L18.

In terms of biological role, this is one of the proteins that binds to the 5S RNA in the ribosome where it forms part of the central protuberance. The chain is Large ribosomal subunit protein bL25 from Anaeromyxobacter dehalogenans (strain 2CP-C).